Consider the following 247-residue polypeptide: Caffeoyl-CoA O-methyltransferase 2 (247 aa).

A substrate-binding site is contributed by lysine 21. Residues threonine 63, glutamate 85, 87–88 (GV), serine 93, aspartate 111, and alanine 140 contribute to the S-adenosyl-L-methionine site. Aspartate 163 contributes to the substrate binding site. Aspartate 163 provides a ligand contact to a divalent metal cation. Residue aspartate 165 coordinates S-adenosyl-L-methionine. Residues aspartate 189 and asparagine 190 each contribute to the a divalent metal cation site. Asparagine 194 is a binding site for substrate.

The protein belongs to the class I-like SAM-binding methyltransferase superfamily. Cation-dependent O-methyltransferase family. CCoAMT subfamily. A divalent metal cation is required as a cofactor.

It carries out the reaction (E)-caffeoyl-CoA + S-adenosyl-L-methionine = (E)-feruloyl-CoA + S-adenosyl-L-homocysteine + H(+). The protein operates within aromatic compound metabolism; phenylpropanoid biosynthesis. In terms of biological role, methylates caffeoyl-CoA to feruloyl-CoA and 5-hydroxyferuloyl-CoA to sinapoyl-CoA. Plays a role in the synthesis of feruloylated polysaccharides. Involved in the reinforcement of the plant cell wall. Also involved in the responding to wounding or pathogen challenge by the increased formation of cell wall-bound ferulic acid polymers. The polypeptide is Caffeoyl-CoA O-methyltransferase 2 (CCOAOMT2) (Eucalyptus globulus (Tasmanian blue gum)).